We begin with the raw amino-acid sequence, 450 residues long: Probable malate:quinone oxidoreductase (450 aa).

It belongs to the MQO family. Requires FAD as cofactor.

The enzyme catalyses (S)-malate + a quinone = a quinol + oxaloacetate. It participates in carbohydrate metabolism; tricarboxylic acid cycle; oxaloacetate from (S)-malate (quinone route): step 1/1. The sequence is that of Probable malate:quinone oxidoreductase from Helicobacter pylori (strain P12).